Reading from the N-terminus, the 331-residue chain is MLSLFNIALKALIMKHNVEFLKRDKEILTHLGLCCKDYVIIDKCSECGNICPNGQQHGDTCININYLLIYAVKRDNYMLAYRLLSWGANEKFANCFRRPLPNLKPPLPKKELTPKEIKQLAYDHFHNDSELITIFEVFRKCRHINDCLNFFYKKNTEFEIYFARLHVYSKTFYGKGWYWFCIFIAVKHSMEHALKKITKTFTPTFYNKTTLNLVLFLSACFYENVEWMKNFFYKGNKKIQQRMLNYGMEWAATHGKVRTFICCYTLGGTASLKLYQKAYQNEKFMIMALCSYLGNIQINNPWESLNPYTMVQNKEKFLPLKFSEETQYFYI.

Belongs to the asfivirus MGF 300 family.

The chain is Protein MGF 300-4L from African swine fever virus (isolate Tick/Malawi/Lil 20-1/1983) (ASFV).